The following is a 641-amino-acid chain: Protein zwilch (641 aa).

Position 312 is a phosphoserine (Ser312).

Belongs to the ZWILCH family. As to quaternary structure, component of the RZZ complex composed of rod, Zw10 and Zwilch.

It is found in the cytoplasm. Its subcellular location is the chromosome. It localises to the centromere. The protein resides in the kinetochore. The protein localises to the cytoskeleton. It is found in the spindle. In terms of biological role, essential component of the mitotic checkpoint, which prevents cells from prematurely exiting mitosis. Required for the assembly of the dynein-dynactin, Mad2 complexes and spindly/CG15415 onto kinetochores. Its function related to the spindle assembly machinery is proposed to depend on its association in the RZZ complex. Failure to assemble the complex due to the absence of any one of its components, results in the incorrect redistribution of the remaining components to diverse membrane compartments. This chain is Protein zwilch, found in Drosophila melanogaster (Fruit fly).